The following is a 179-amino-acid chain: Replication restart protein DnaT (179 aa).

The tract at residues 156 to 179 (GGLPKRDVNTVSEPDSQIPPGFRG) is disordered.

The protein belongs to the DnaT family. In terms of assembly, homooligomerizes. Interacts with PriB. Component of the replication restart primosome. Primosome assembly occurs via a 'hand-off' mechanism. PriA binds to replication forks, subsequently PriB then DnaT bind; DnaT then displaces ssDNA to generate the helicase loading substrate.

In terms of biological role, involved in the restart of stalled replication forks, which reloads the replicative helicase on sites other than the origin of replication. Can function in multiple replication restart pathways. Displaces ssDNA from a PriB-ssDNA complex. Probably forms a spiral filament on ssDNA. The polypeptide is Replication restart protein DnaT (Shigella boydii serotype 18 (strain CDC 3083-94 / BS512)).